The primary structure comprises 817 residues: Probable beta-glucosidase G (817 aa).

An N-terminal signal peptide occupies residues 1–20 (MANIAHLIVSGLLAATVAHG). 4 N-linked (GlcNAc...) asparagine glycosylation sites follow: N40, N58, N229, and N276. D304 is an active-site residue. N-linked (GlcNAc...) asparagine glycans are attached at residues N343, N350, N402, N507, N563, N584, N623, N662, N679, and N715.

It belongs to the glycosyl hydrolase 3 family.

It localises to the secreted. The catalysed reaction is Hydrolysis of terminal, non-reducing beta-D-glucosyl residues with release of beta-D-glucose.. Its pathway is glycan metabolism; cellulose degradation. In terms of biological role, beta-glucosidases are one of a number of cellulolytic enzymes involved in the degradation of cellulosic biomass. Catalyzes the last step releasing glucose from the inhibitory cellobiose. The chain is Probable beta-glucosidase G (bglG) from Aspergillus terreus (strain NIH 2624 / FGSC A1156).